The sequence spans 185 residues: Elongation factor P (185 aa).

It belongs to the elongation factor P family.

The protein resides in the cytoplasm. It participates in protein biosynthesis; polypeptide chain elongation. Its function is as follows. Involved in peptide bond synthesis. Stimulates efficient translation and peptide-bond synthesis on native or reconstituted 70S ribosomes in vitro. Probably functions indirectly by altering the affinity of the ribosome for aminoacyl-tRNA, thus increasing their reactivity as acceptors for peptidyl transferase. The polypeptide is Elongation factor P (Streptococcus equi subsp. equi (strain 4047)).